We begin with the raw amino-acid sequence, 214 residues long: Thymidylate kinase (214 aa).

Residue 10–17 (GGEGAGKS) participates in ATP binding.

It belongs to the thymidylate kinase family.

The enzyme catalyses dTMP + ATP = dTDP + ADP. Functionally, phosphorylation of dTMP to form dTDP in both de novo and salvage pathways of dTTP synthesis. This Brucella abortus (strain S19) protein is Thymidylate kinase.